Reading from the N-terminus, the 960-residue chain is Mast/stem cell growth factor receptor Kit (960 aa).

Residues 1 to 24 (MEGAHLAWELAHAVLLLSLIPAGG) form the signal peptide. Over 25–511 (SVPHEESSLV…IRTHTLFTPL (487 aa)) the chain is Extracellular. Ig-like C2-type domains are found at residues 27–102 (PHEE…VFVK), 111–194 (DSLI…LNVR), 201–294 (PVIT…LKAL), 303–396 (ATMN…VYVK), and 399–497 (PEIL…FNFA). 4 disulfide bridges follow: Cys45/Cys87, Cys126/Cys175, Cys141/Cys172, and Cys222/Cys276. Asn76, Asn135, Asn149, Asn269, Asn286, Asn306, Asn318, Asn338, Asn343, Asn356, Asn453, and Asn469 each carry an N-linked (GlcNAc...) asparagine glycan. An intrachain disulfide couples Cys414 to Cys481. A helical transmembrane segment spans residues 512 to 532 (LIAFGVAAGLMCIIVMILVYI). Topologically, residues 533–960 (YLQKPKYEVQ…TQPLLVREDV (428 aa)) are cytoplasmic. Residue Tyr554 participates in Mg(2+) binding. A phosphotyrosine; by autocatalysis mark is found at Tyr554 and Tyr556. The Protein kinase domain maps to 575–913 (LSFGKTLGAG…QIVQLIEQQL (339 aa)). Residues 582–589 (GAGAFGKV), Lys609, and 657–663 (EYCCYGD) contribute to the ATP site. Tyr689 and Tyr706 each carry phosphotyrosine; by autocatalysis. The active-site Proton acceptor is the Asp777. Arg781 provides a ligand contact to ATP. Positions 782 and 795 each coordinate Mg(2+). Tyr808 and Tyr921 each carry phosphotyrosine; by autocatalysis.

It belongs to the protein kinase superfamily. Tyr protein kinase family. CSF-1/PDGF receptor subfamily. Ubiquitinated. KIT is rapidly ubiquitinated after autophosphorylation induced by KITLG/SCF binding, leading to internalization and degradation. Post-translationally, autophosphorylated on tyrosine residues. KITLG/SCF binding promotes autophosphorylation. Phosphorylated tyrosine residues are important for interaction with specific binding partners. In terms of tissue distribution, high in the brain and testes and also present in the bursa of Fabricus, heart, kidney, lung, spleen thymus and ovary.

Its subcellular location is the cell membrane. It carries out the reaction L-tyrosyl-[protein] + ATP = O-phospho-L-tyrosyl-[protein] + ADP + H(+). Tyrosine-protein kinase that acts as a cell-surface receptor for the cytokine KITLG/SCF and plays an essential role in the regulation of cell survival and proliferation, hematopoiesis, stem cell maintenance, gametogenesis, mast cell development, migration and function, and in melanogenesis. In response to KITLG/SCF binding, KIT can activate several signaling pathways. Promotes phosphorylation of PIK3R1, the regulatory subunit of phosphatidylinositol 3-kinase, and subsequent activation of the kinase AKT1. Activated KIT also transmits signals via GRB2 and activation of RAS, RAF1 and the MAP kinases MAPK1/ERK2 and/or MAPK3/ERK1. Promotes activation of STAT family members STAT1, STAT3, STAT5A and STAT5B. KIT promotes activation of PLCG1, leading to the production of the cellular signaling molecules diacylglycerol and inositol 1,4,5-trisphosphate. KIT signaling is modulated by protein phosphatases, and by rapid internalization and degradation of the receptor. This chain is Mast/stem cell growth factor receptor Kit (KIT), found in Gallus gallus (Chicken).